The primary structure comprises 125 residues: Protein ApaG (125 aa).

In terms of domain architecture, ApaG spans 1 to 125; that stretch reads MIEQPRICVQ…FRLAIPALIH (125 aa).

This Yersinia pseudotuberculosis serotype IB (strain PB1/+) protein is Protein ApaG.